The sequence spans 1488 residues: Chromosome partition protein MukB (1488 aa).

34–41 (GGNGAGKS) contributes to the ATP binding site. Coiled-coil stretches lie at residues 326-418 (LEAD…QYNQ), 444-472 (LDTFQAKEQEATEKLLSLEQKMSVAQTAH), and 509-602 (RHLA…RRAP). The segment at 666 to 783 (PGGAEDQRLN…SLPIFGRAAR (118 aa)) is flexible hinge. 3 coiled-coil regions span residues 835–923 (EAEI…AKLE), 977–1116 (EMLS…AKAG), and 1209–1265 (VEAI…LQSV). The disordered stretch occupies residues 1049–1074 (ADSGAEERARQRRDELHAQLSNNRSR). Residues 1051-1065 (SGAEERARQRRDELH) are compositionally biased toward basic and acidic residues.

This sequence belongs to the SMC family. MukB subfamily. In terms of assembly, homodimerization via its hinge domain. Binds to DNA via its C-terminal region. Interacts, and probably forms a ternary complex, with MukE and MukF via its C-terminal region. The complex formation is stimulated by calcium or magnesium. Interacts with tubulin-related protein FtsZ.

It localises to the cytoplasm. The protein localises to the nucleoid. Plays a central role in chromosome condensation, segregation and cell cycle progression. Functions as a homodimer, which is essential for chromosome partition. Involved in negative DNA supercoiling in vivo, and by this means organize and compact chromosomes. May achieve or facilitate chromosome segregation by condensation DNA from both sides of a centrally located replisome during cell division. The polypeptide is Chromosome partition protein MukB (Salmonella heidelberg (strain SL476)).